Here is a 222-residue protein sequence, read N- to C-terminus: Sugar fermentation stimulation protein homolog (222 aa).

This sequence belongs to the SfsA family.

The chain is Sugar fermentation stimulation protein homolog from Thermotoga neapolitana (strain ATCC 49049 / DSM 4359 / NBRC 107923 / NS-E).